A 382-amino-acid chain; its full sequence is uncharacterized protein (382 aa).

The next 12 helical transmembrane spans lie at 8 to 28, 45 to 65, 75 to 95, 102 to 122, 131 to 151, 157 to 177, 204 to 224, 231 to 251, 270 to 290, 291 to 311, 325 to 345, and 349 to 369; these read VMLL…LNTL, MVSS…GYLI, YLAS…VGFW, FIAG…LMCS, LLAA…LLVS, LLHV…PLLF, LGVN…GLMP, GMAN…GILG, VQVF…AMAP, ALFI…AWAC, ALLL…AMLM, and SDNL…LMLL.

It belongs to the major facilitator superfamily. YcaD (TC 2.A.1.26) family.

It localises to the cell inner membrane. This is an uncharacterized protein from Salmonella dublin (strain CT_02021853).